Here is a 595-residue protein sequence, read N- to C-terminus: DNA mismatch repair protein MutL (595 aa).

It belongs to the DNA mismatch repair MutL/HexB family.

In terms of biological role, this protein is involved in the repair of mismatches in DNA. It is required for dam-dependent methyl-directed DNA mismatch repair. May act as a 'molecular matchmaker', a protein that promotes the formation of a stable complex between two or more DNA-binding proteins in an ATP-dependent manner without itself being part of a final effector complex. The polypeptide is DNA mismatch repair protein MutL (Endomicrobium trichonymphae).